Reading from the N-terminus, the 108-residue chain is Thaicobrin (108 aa).

The 108-residue stretch at 1–108 (SPPGNWQKAD…IWQKGLWWLG (108 aa)) folds into the B30.2/SPRY domain.

Belongs to the ohanin/vespryn family. In terms of tissue distribution, expressed by the venom gland.

It is found in the secreted. In terms of biological role, neurotoxin that produces dose-dependent hypolocomotion and hyperalgesia in mice. May directly act on the central nervous system, as it is 6500-fold more potent when administered intracerebroventricularly than intraperitoneal. The sequence is that of Thaicobrin from Naja kaouthia (Monocled cobra).